The primary structure comprises 243 residues: Ubiquinone/menaquinone biosynthesis C-methyltransferase UbiE (243 aa).

S-adenosyl-L-methionine contacts are provided by residues threonine 69, aspartate 90, and 116-117; that span reads DA.

Belongs to the class I-like SAM-binding methyltransferase superfamily. MenG/UbiE family.

The enzyme catalyses a 2-demethylmenaquinol + S-adenosyl-L-methionine = a menaquinol + S-adenosyl-L-homocysteine + H(+). It catalyses the reaction a 2-methoxy-6-(all-trans-polyprenyl)benzene-1,4-diol + S-adenosyl-L-methionine = a 5-methoxy-2-methyl-3-(all-trans-polyprenyl)benzene-1,4-diol + S-adenosyl-L-homocysteine + H(+). It participates in quinol/quinone metabolism; menaquinone biosynthesis; menaquinol from 1,4-dihydroxy-2-naphthoate: step 2/2. It functions in the pathway cofactor biosynthesis; ubiquinone biosynthesis. In terms of biological role, methyltransferase required for the conversion of demethylmenaquinol (DMKH2) to menaquinol (MKH2) and the conversion of 2-polyprenyl-6-methoxy-1,4-benzoquinol (DDMQH2) to 2-polyprenyl-3-methyl-6-methoxy-1,4-benzoquinol (DMQH2). The chain is Ubiquinone/menaquinone biosynthesis C-methyltransferase UbiE from Burkholderia multivorans (strain ATCC 17616 / 249).